Here is a 433-residue protein sequence, read N- to C-terminus: tRNA-2-methylthio-N(6)-dimethylallyladenosine synthase (433 aa).

Residues 3–118 form the MTTase N-terminal domain; sequence KRLYIETLGC…IRDVIKQEKA (116 aa). [4Fe-4S] cluster is bound by residues Cys-12, Cys-49, Cys-81, Cys-150, Cys-154, and Cys-157. The region spanning 136–371 is the Radical SAM core domain; it reads RTSPYKAFIN…LHLQMLDSIS (236 aa). Residues 372-433 form the TRAM domain; the sequence is EQEKDKVYEV…RLSLEGELVG (62 aa).

It belongs to the methylthiotransferase family. MiaB subfamily. In terms of assembly, monomer. Requires [4Fe-4S] cluster as cofactor.

The protein localises to the cytoplasm. It carries out the reaction N(6)-dimethylallyladenosine(37) in tRNA + (sulfur carrier)-SH + AH2 + 2 S-adenosyl-L-methionine = 2-methylsulfanyl-N(6)-dimethylallyladenosine(37) in tRNA + (sulfur carrier)-H + 5'-deoxyadenosine + L-methionine + A + S-adenosyl-L-homocysteine + 2 H(+). In terms of biological role, catalyzes the methylthiolation of N6-(dimethylallyl)adenosine (i(6)A), leading to the formation of 2-methylthio-N6-(dimethylallyl)adenosine (ms(2)i(6)A) at position 37 in tRNAs that read codons beginning with uridine. The protein is tRNA-2-methylthio-N(6)-dimethylallyladenosine synthase of Nitratiruptor sp. (strain SB155-2).